Here is a 209-residue protein sequence, read N- to C-terminus: Guanylate kinase (209 aa).

Residues 8–186 (GVLYIVSAPS…ALQDLVAITR (179 aa)) enclose the Guanylate kinase-like domain. 15-22 (APSGAGKT) is an ATP binding site.

It belongs to the guanylate kinase family.

It localises to the cytoplasm. It carries out the reaction GMP + ATP = GDP + ADP. Its function is as follows. Essential for recycling GMP and indirectly, cGMP. This chain is Guanylate kinase, found in Thiobacillus denitrificans (strain ATCC 25259 / T1).